We begin with the raw amino-acid sequence, 116 residues long: MSVETFTPAPLHFTQGAASKVKTLVDEEGNPRLKLRVFVTGGGCSGFQYGFTFDEDVAEDDTIVEREGVSLVVDAMSFQYLVGSEVDYQEGLEGSRFVIKNPNATTTCGCGSSFSI.

3 residues coordinate iron-sulfur cluster: Cys44, Cys108, and Cys110.

It belongs to the HesB/IscA family. In terms of assembly, homodimer. Iron-sulfur cluster is required as a cofactor.

Required for insertion of 4Fe-4S clusters for at least IspG. This chain is Iron-sulfur cluster insertion protein ErpA, found in Ectopseudomonas mendocina (strain ymp) (Pseudomonas mendocina).